We begin with the raw amino-acid sequence, 149 residues long: Large ribosomal subunit protein eL19 (149 aa).

A disordered region spans residues 46–99; it reads EDGTIEAKTAKGNSRGRARKRQQKRAYGHKKGHGSRKGRSGGRQNEKEDWQSRI. Positions 59–85 are enriched in basic residues; the sequence is SRGRARKRQQKRAYGHKKGHGSRKGRS. Positions 89–99 are enriched in basic and acidic residues; that stretch reads QNEKEDWQSRI.

It belongs to the eukaryotic ribosomal protein eL19 family. In terms of assembly, part of the 50S ribosomal subunit.

In terms of biological role, binds to the 23S rRNA. The chain is Large ribosomal subunit protein eL19 from Natronomonas pharaonis (strain ATCC 35678 / DSM 2160 / CIP 103997 / JCM 8858 / NBRC 14720 / NCIMB 2260 / Gabara) (Halobacterium pharaonis).